The chain runs to 284 residues: Phosphatidylserine decarboxylase proenzyme (284 aa).

Catalysis depends on charge relay system; for autoendoproteolytic cleavage activity residues aspartate 88, histidine 145, and serine 248. Residue serine 248 is the Schiff-base intermediate with substrate; via pyruvic acid; for decarboxylase activity of the active site. The residue at position 248 (serine 248) is a Pyruvic acid (Ser); by autocatalysis.

Belongs to the phosphatidylserine decarboxylase family. PSD-B subfamily. Prokaryotic type I sub-subfamily. In terms of assembly, heterodimer of a large membrane-associated beta subunit and a small pyruvoyl-containing alpha subunit. Requires pyruvate as cofactor. Is synthesized initially as an inactive proenzyme. Formation of the active enzyme involves a self-maturation process in which the active site pyruvoyl group is generated from an internal serine residue via an autocatalytic post-translational modification. Two non-identical subunits are generated from the proenzyme in this reaction, and the pyruvate is formed at the N-terminus of the alpha chain, which is derived from the carboxyl end of the proenzyme. The autoendoproteolytic cleavage occurs by a canonical serine protease mechanism, in which the side chain hydroxyl group of the serine supplies its oxygen atom to form the C-terminus of the beta chain, while the remainder of the serine residue undergoes an oxidative deamination to produce ammonia and the pyruvoyl prosthetic group on the alpha chain. During this reaction, the Ser that is part of the protease active site of the proenzyme becomes the pyruvoyl prosthetic group, which constitutes an essential element of the active site of the mature decarboxylase.

It is found in the cell membrane. It carries out the reaction a 1,2-diacyl-sn-glycero-3-phospho-L-serine + H(+) = a 1,2-diacyl-sn-glycero-3-phosphoethanolamine + CO2. It functions in the pathway phospholipid metabolism; phosphatidylethanolamine biosynthesis; phosphatidylethanolamine from CDP-diacylglycerol: step 2/2. Functionally, catalyzes the formation of phosphatidylethanolamine (PtdEtn) from phosphatidylserine (PtdSer). The chain is Phosphatidylserine decarboxylase proenzyme from Albidiferax ferrireducens (strain ATCC BAA-621 / DSM 15236 / T118) (Rhodoferax ferrireducens).